We begin with the raw amino-acid sequence, 450 residues long: MRECISVHVGQAGVQIGNACWELYCLEHGIQPDGQMPSDKTIGTGDDSFNTFFSETGSGKHVPRAVYVDLEPTVVDEVRTGTYRQLFHPEQLITGKEDAANNYARGHYTIGKEIVDLVLDRIRKLADQCTGLQGFLIFHSFGGGTGSGFTSLLMERLSVDYGKKSKLEFAVYPAPQVSTAVVEPYNSILTTHTTLEHSDCAFMVDNEAIYDICRRNLDIERPTYTNLNRLIGQIVSSITASLRFDGALNVDLTEFQTNLVPYPRIHFPLVTYAPVISSEKAYHEQLTVSEITNTCFEPANQMVKCDPRHGKYMACCLLYRGDVVPKDVNAAIAAIKTKRSIQFVDWCPTGFKVGINYQPPTVVPGGDLAKVQRAVCMLSNTTAIAEAWARLDHKFDLMYAKRAFVHWYVGEGMEEGEFSEAREDLAALEKDYEEVGLDSTEADDTAGEEF.

Q11 contributes to the GTP binding site. K40 bears the N6-acetyllysine mark. Positions 71, 140, 144, 145, 179, 206, and 228 each coordinate GTP. Residue E71 participates in Mg(2+) binding. E254 is an active-site residue.

This sequence belongs to the tubulin family. In terms of assembly, dimer of alpha and beta chains. A typical microtubule is a hollow water-filled tube with an outer diameter of 25 nm and an inner diameter of 15 nM. Alpha-beta heterodimers associate head-to-tail to form protofilaments running lengthwise along the microtubule wall with the beta-tubulin subunit facing the microtubule plus end conferring a structural polarity. Microtubules usually have 13 protofilaments but different protofilament numbers can be found in some organisms and specialized cells. Requires Mg(2+) as cofactor. Undergoes a tyrosination/detyrosination cycle, the cyclic removal and re-addition of a C-terminal tyrosine residue by the enzymes tubulin tyrosine carboxypeptidase (TTCP) and tubulin tyrosine ligase (TTL), respectively. In terms of processing, acetylation of alpha chains at Lys-40 stabilizes microtubules and affects affinity and processivity of microtubule motors. This modification has a role in multiple cellular functions, ranging from cell motility, cell cycle progression or cell differentiation to intracellular trafficking and signaling.

Its subcellular location is the cytoplasm. The protein resides in the cytoskeleton. It catalyses the reaction GTP + H2O = GDP + phosphate + H(+). Tubulin is the major constituent of microtubules, a cylinder consisting of laterally associated linear protofilaments composed of alpha- and beta-tubulin heterodimers. Microtubules grow by the addition of GTP-tubulin dimers to the microtubule end, where a stabilizing cap forms. Below the cap, tubulin dimers are in GDP-bound state, owing to GTPase activity of alpha-tubulin. This is Tubulin alpha chain from Lepidoglyphus destructor (Storage mite).